Here is a 267-residue protein sequence, read N- to C-terminus: Tryptophan synthase alpha chain (267 aa).

Residues E39 and D50 each act as proton acceptor in the active site.

Belongs to the TrpA family. In terms of assembly, tetramer of two alpha and two beta chains.

The catalysed reaction is (1S,2R)-1-C-(indol-3-yl)glycerol 3-phosphate + L-serine = D-glyceraldehyde 3-phosphate + L-tryptophan + H2O. Its pathway is amino-acid biosynthesis; L-tryptophan biosynthesis; L-tryptophan from chorismate: step 5/5. The alpha subunit is responsible for the aldol cleavage of indoleglycerol phosphate to indole and glyceraldehyde 3-phosphate. The chain is Tryptophan synthase alpha chain from Helicobacter hepaticus (strain ATCC 51449 / 3B1).